Consider the following 368-residue polypeptide: Phosphate acyltransferase (368 aa).

Residues 337 to 368 (LEQAARDASGAGQASPIAGQPAEPYAAQSSKA) form a disordered region.

It belongs to the PlsX family. In terms of assembly, homodimer. Probably interacts with PlsY.

The protein localises to the cytoplasm. The enzyme catalyses a fatty acyl-[ACP] + phosphate = an acyl phosphate + holo-[ACP]. It functions in the pathway lipid metabolism; phospholipid metabolism. In terms of biological role, catalyzes the reversible formation of acyl-phosphate (acyl-PO(4)) from acyl-[acyl-carrier-protein] (acyl-ACP). This enzyme utilizes acyl-ACP as fatty acyl donor, but not acyl-CoA. In Paraburkholderia phytofirmans (strain DSM 17436 / LMG 22146 / PsJN) (Burkholderia phytofirmans), this protein is Phosphate acyltransferase.